The primary structure comprises 635 residues: Biosynthetic arginine decarboxylase (635 aa).

An N6-(pyridoxal phosphate)lysine modification is found at Lys-100. 282-292 (VDIGGGLGVDY) is a substrate binding site.

This sequence belongs to the Orn/Lys/Arg decarboxylase class-II family. SpeA subfamily. Requires Mg(2+) as cofactor. Pyridoxal 5'-phosphate is required as a cofactor.

The catalysed reaction is L-arginine + H(+) = agmatine + CO2. Its pathway is amine and polyamine biosynthesis; agmatine biosynthesis; agmatine from L-arginine: step 1/1. Functionally, catalyzes the biosynthesis of agmatine from arginine. The polypeptide is Biosynthetic arginine decarboxylase (Geobacter sulfurreducens (strain ATCC 51573 / DSM 12127 / PCA)).